Here is a 241-residue protein sequence, read N- to C-terminus: Transcriptional regulatory protein SrrA (241 aa).

A Response regulatory domain is found at 4 to 117; that stretch reads EILIVDDEDR…EVVLRVKALL (114 aa). Position 53 is a 4-aspartylphosphate (D53). The segment at residues 133–233 is a DNA-binding region (ompR/PhoB-type); sequence RDVIEFKHLE…VWGVGYKFEV (101 aa).

Phosphorylated by SrrB.

The protein localises to the cytoplasm. Functionally, member of the two-component regulatory system SrrA/SrrB, which is involved in the global regulation of staphylococcal virulence factors in response to environmental oxygen levels as well as biofilm formation. Also plays an essential role in host-derived nitric oxide resistance by regulating hmp/flavohemoglobin, an enzyme that detoxifies nitric oxide by converting it to nitrate. Functions as a transcription regulator by direct binding to promoter regions of target genes. The polypeptide is Transcriptional regulatory protein SrrA (srrA) (Staphylococcus aureus (strain NCTC 8325 / PS 47)).